Reading from the N-terminus, the 240-residue chain is Keratinocyte-associated protein 3 (240 aa).

4 consecutive transmembrane segments (helical) span residues 21–41, 63–83, 95–115, and 163–183; these read VGLALILVGHVNLLLGAVLHG, VISVGSGLLSVSLGLVALLAS, LLALALVNLLLSAACSLGLLL, and ALALWIPSVFMSAAEAALSGY.

It belongs to the TMEM54 family.

The protein resides in the membrane. In Bos taurus (Bovine), this protein is Keratinocyte-associated protein 3 (KRTCAP3).